Consider the following 694-residue polypeptide: Scarecrow-like protein 33 (694 aa).

The segment at Pro289 to Lys313 is disordered. A GRAS domain is found at Asn309 to Val692. A leucine repeat I (LRI) region spans residues Pro316–Gln376. Positions Tyr395–Gly462 are VHIID. Positions Ile428–Asp432 match the VHIID motif. A leucine repeat II (LRII) region spans residues Glu478–Asp510. Residues Val519–Asn613 form a PFYRE region. Residues Ala616 to Val692 form an SAW region.

The protein belongs to the GRAS family. Interacts with SNRNP35.

The protein localises to the nucleus. Functionally, probable transcription factor involved in plant development. The sequence is that of Scarecrow-like protein 33 (SCL33) from Arabidopsis thaliana (Mouse-ear cress).